The sequence spans 195 residues: GRF1-interacting factor 2 (195 aa).

The segment at 166 to 195 (QQPETGLGGNVGLRGGKQDGADGQGKDDGK) is disordered. The segment covering 171–180 (GLGGNVGLRG) has biased composition (gly residues). The span at 181–195 (GKQDGADGQGKDDGK) shows a compositional bias: basic and acidic residues.

This sequence belongs to the SS18 family. In terms of assembly, interacts with GRF1. As to expression, predominantly expressed in shoot tips containing the shoot apical meristem (SAM) and flower buds. Also expressed in mature flowers.

Functionally, transcription coactivator that plays a role in the regulation of cell expansion in leaf and cotyledons tissues. Component of a network formed by miR396, the GRFs and their interacting factors (GIFs) acting in the regulation of meristem function, at least partially through the control of cell proliferation. GIFs are involved in the positive regulation of cell proliferation of lateral organs in a functionally redundant manner. The chain is GRF1-interacting factor 2 (GIF2) from Arabidopsis thaliana (Mouse-ear cress).